The chain runs to 234 residues: GTP:AMP phosphotransferase, mitochondrial (234 aa).

GTP is bound at residue 24-29 (GSGKGT). The segment at 45–74 (SSGDILRQEIKSESTLGREATTYIAQGKLL) is NMP. Residues serine 46, arginine 51, 72–74 (KLL), 103–106 (GFPR), and glutamine 110 each bind AMP. The LID stretch occupies residues 144–181 (NRYVHVPSGRVYNLQYNPPKVPGLDDITGEPLTKRLDD). Residues arginine 145 and 154 to 155 (VY) each bind GTP. Positions 178 and 189 each coordinate AMP. Serine 218 serves as a coordination point for GTP.

The protein belongs to the adenylate kinase family. AK3 subfamily. As to quaternary structure, monomer.

The protein resides in the mitochondrion matrix. The catalysed reaction is a ribonucleoside 5'-triphosphate + AMP = a ribonucleoside 5'-diphosphate + ADP. Its function is as follows. Involved in maintaining the homeostasis of cellular nucleotides by catalyzing the interconversion of nucleoside phosphates. Has GTP:AMP phosphotransferase and ITP:AMP phosphotransferase activities. Does not accept ATP as phosphate donor. This chain is GTP:AMP phosphotransferase, mitochondrial, found in Saccharomyces cerevisiae (Baker's yeast).